The sequence spans 509 residues: 2,3-bisphosphoglycerate-independent phosphoglycerate mutase (509 aa).

A Mn(2+)-binding site is contributed by Asp-11. At Tyr-35 the chain carries Phosphotyrosine. Ser-61 contacts Mn(2+). Residue Ser-61 is the Phosphoserine intermediate of the active site. Residues His-122, 152-153 (RD), Arg-184, Arg-190, 260-263 (RPDR), and Lys-335 contribute to the substrate site. 5 residues coordinate Mn(2+): Asp-402, His-406, Asp-443, His-444, and His-461.

This sequence belongs to the BPG-independent phosphoglycerate mutase family. In terms of assembly, monomer. The cofactor is Mn(2+).

The catalysed reaction is (2R)-2-phosphoglycerate = (2R)-3-phosphoglycerate. It functions in the pathway carbohydrate degradation; glycolysis; pyruvate from D-glyceraldehyde 3-phosphate: step 3/5. Essential for rapid growth and for sporulation. Catalyzes the interconversion of 2-phosphoglycerate and 3-phosphoglycerate. This Bacillus thuringiensis (strain Al Hakam) protein is 2,3-bisphosphoglycerate-independent phosphoglycerate mutase.